The sequence spans 20 residues: Pregnancy-associated glycoprotein 61C (20 aa).

The protein belongs to the peptidase A1 family. In terms of processing, N-glycosylated. Expressed in chorionic epithelium (trophectoderm).

The protein localises to the secreted. It localises to the extracellular space. The chain is Pregnancy-associated glycoprotein 61C from Bubalus bubalis (Domestic water buffalo).